A 757-amino-acid chain; its full sequence is 5-methyltetrahydropteroyltriglutamate--homocysteine methyltransferase (757 aa).

5-methyltetrahydropteroyltri-L-glutamate is bound by residues 16–19 and Lys112; that span reads RELK. Residues 433 to 435 and Glu486 contribute to the L-homocysteine site; that span reads IGS. L-methionine is bound by residues 433–435 and Glu486; that span reads IGS. Residues 517–518 and Trp563 contribute to the 5-methyltetrahydropteroyltri-L-glutamate site; that span reads RC. Position 601 (Asp601) interacts with L-homocysteine. An L-methionine-binding site is contributed by Asp601. Glu607 is a 5-methyltetrahydropteroyltri-L-glutamate binding site. Positions 643, 645, and 667 each coordinate Zn(2+). His696 acts as the Proton donor in catalysis. Residue Cys728 participates in Zn(2+) binding.

The protein belongs to the vitamin-B12 independent methionine synthase family. Zn(2+) is required as a cofactor.

The catalysed reaction is 5-methyltetrahydropteroyltri-L-glutamate + L-homocysteine = tetrahydropteroyltri-L-glutamate + L-methionine. It functions in the pathway amino-acid biosynthesis; L-methionine biosynthesis via de novo pathway; L-methionine from L-homocysteine (MetE route): step 1/1. Its function is as follows. Catalyzes the transfer of a methyl group from 5-methyltetrahydrofolate to homocysteine resulting in methionine formation. This chain is 5-methyltetrahydropteroyltriglutamate--homocysteine methyltransferase, found in Pasteurella multocida (strain Pm70).